Reading from the N-terminus, the 173-residue chain is Large ribosomal subunit protein uL10 (173 aa).

This sequence belongs to the universal ribosomal protein uL10 family. Part of the ribosomal stalk of the 50S ribosomal subunit. The N-terminus interacts with L11 and the large rRNA to form the base of the stalk. The C-terminus forms an elongated spine to which L12 dimers bind in a sequential fashion forming a multimeric L10(L12)X complex.

Functionally, forms part of the ribosomal stalk, playing a central role in the interaction of the ribosome with GTP-bound translation factors. This Thiobacillus denitrificans (strain ATCC 25259 / T1) protein is Large ribosomal subunit protein uL10.